A 446-amino-acid chain; its full sequence is Exodeoxyribonuclease 7 large subunit (446 aa).

Belongs to the XseA family. Heterooligomer composed of large and small subunits.

The protein resides in the cytoplasm. It carries out the reaction Exonucleolytic cleavage in either 5'- to 3'- or 3'- to 5'-direction to yield nucleoside 5'-phosphates.. Functionally, bidirectionally degrades single-stranded DNA into large acid-insoluble oligonucleotides, which are then degraded further into small acid-soluble oligonucleotides. The protein is Exodeoxyribonuclease 7 large subunit of Streptococcus thermophilus (strain ATCC BAA-250 / LMG 18311).